Reading from the N-terminus, the 166-residue chain is Olee1-like protein (166 aa).

Positions 1–23 (MAKSIIIQAPALCFLSLLGFAYS) are cleaved as a signal peptide. 3 disulfides stabilise this stretch: Cys-35–Cys-106, Cys-38–Cys-150, and Cys-59–Cys-94.

The protein belongs to the Ole e I family.

The protein resides in the secreted. The sequence is that of Olee1-like protein from Betula pendula (European white birch).